The following is a 206-amino-acid chain: Probable chemoreceptor glutamine deamidase CheD 1 (206 aa).

Belongs to the CheD family.

It catalyses the reaction L-glutaminyl-[protein] + H2O = L-glutamyl-[protein] + NH4(+). Its function is as follows. Probably deamidates glutamine residues to glutamate on methyl-accepting chemotaxis receptors (MCPs), playing an important role in chemotaxis. This Shewanella oneidensis (strain ATCC 700550 / JCM 31522 / CIP 106686 / LMG 19005 / NCIMB 14063 / MR-1) protein is Probable chemoreceptor glutamine deamidase CheD 1.